A 2293-amino-acid chain; its full sequence is MKGHQFKSWIFELREIVREIKNSHYFLDSWTQFNSVGSFIHIFFHQERFRKLLDPRIFSILLLRNSQGSTSNRYFTIKGVGLFVVAALLYRINNRNMVESKNLYLKGLLPIPMNSIGPRNDTSEESFGSSNINRLIVSLLYLTKGKKISESCFRDPKESTWVLPITQKCIMPESNWSSRWWRNWIGKKRDFCCKISNETVAGIDISFKDKEKDIKYLEFLFVYYMDDPIRKGHDWELFDRLSPSKRRNIINLNSGQLFEILVKDWICYLMFAFREKIPIEVEGFFKQQGAGSTIQSNDIEHVSHLFSRNKWAISLQNCAQFHMWQFHQDLFVSWGKNPHESDFLRKISRENWIWLDNVWLVNKDRFFSKVRNVSSNIQYDSTRSSFVQVTDSSQLNGSSDQFIDPFDSISNEDSEYHYHTLFNQREIQQLKERSILLDPSFIQTEGREIESDRFPKYLSGYSSMPRLFTEREKRMNNHLLPEESEEFLGNPTRAIRSFFSDRWSELHLGSNPTERSTRDQKLLKKEQDVSFVPSRRSENKEIVNIFKIITYLQNTVSIHPISSDLGCDMVPKDELDMDSSNKISFLNKNPFFDLFHLFHERKRGGYTLRHESEERFQEMADLFTLSITEPDLVYHKGFAFSIDSYGLDQRQFLKEVFNSRDESKKKSLLVLPPIFYEENESFYRRIRKNWVRISCGNYLEDPKRVVFASNNIMEAVNQYRLIRNLIQIQFQYSPYGYIRNVLNRFFLMKRPDRNFEYGIQRDLIGNDTLNHSTIMKDTINQHLSNLKKSQKKWFDPLIFLSQTERSINRDPNAYRYKWSNGSKNFQEHLEHFVSERKSRFQVVFDQLCINQYSIDWSEVIDKKDLSKSLRFFLSKLLRFFLSKLLLFLSKLLLFLSNSLPFFFVSFENIPIHRSEIHIYELKGPNDQLCNQLLESIGLQIVHLKKLKPFLLDDHNTSQKSKFLINGGTISPFLFNKIPKWMIDSFHTRKNRRKSFDNTDSYFSIVSHDQDNWLNPVKPFQRSSLISSFSKANRLRFLNNPHHFCFYCNKRFPFYVEKTRLKNSDFTYGQFLTILFIHNKIFSSCGGKKKHAFLERDTISPSSIESQVSNIFISNDFPQSGDERYNLYKSFHFPIRSDPLVRRAIYSIADISGTPLIEGQRVNFERTYCQTLSDMNLSDSEEKSLHQYLNFNSNMGLIHTPCSEKYLQRKKRSLCLKKCVDKGQMDRTFQRDSAFSTLSKWNLFQTYMPWFFTSTGYKYLNLIFLDTFSDLLRILSSSQKFVSIFHDIMHGLDISWRILQKKLCLPQRNLISEISSKSLHNLLLSEEMIHRNNESSLISTHLRSPNVREVLYSILFLLLVAGYIVRTHLLFVSRAYSELQTEFEKIKSLMIPSYMIELRKLLDRYPTSELNSFWLKNLFLVALEQLGDCLEEIRGSGGNMLWGGDPAYGVKSIRSKKKDLKINFIDIIDLISIIPNPINRITFSRNTRHLSHTSKKIYSVIRKRKNVSGDWIDDKIESWVANSDSIDDKEREFLVQFSTLRAEKRIDQILLSLTHSDHLSKNDSGYQMIEQPGTIYLRYLVDIHKKYLMNYEFNTSCLAERRIFLAHYQTITYSQTSCGANSFHFPSHGKPFSLRLALSPSRSILVIGSIGTGRSYLVKYLATNSYVPFITVFLNKFLDNKPKGFFIDDIDIDDSDDIDASNDIHRELDTELELLTMMNALTMDMMSEIDRFYITLQFELAKAMSPCIIWIPNIHDLDVNESSYLALGLLVNSLSRDCERCSTRNILVIASTHIPQKVDPALIAPNKLNTCIKIRRLLIPQQRKHFFTLSYTRGFHLEKKMFHTNGFESITMGSSARDLVALTNEALSISITQKKSIIDTNTIRSALHRQTWDLRSQVRSVQDHGILFYQIGRAVAQNVLISNCPIDPISIYMKKKSCNEGDSYLYKWYFELGTSMKKFTILLYLLSCSAGSVAQDLWSLPGPDEKNRITSYGFIENDSDLVHGLLEVQGALVGSSRTEKDCSQFDNDRVTLLFRSEPRDPLYMMQDGSCSIVDQRFLYEKYESGFEEGEGEGVLDPQQIEEDLFNHIVWAPRIWRPRGFLFDCIERPNELGFPYLAGSFRGKRIIYDEKYELQENDSEFLQSGTMQYQRRDRSSKEQGFFRISQFIWDPADPLFLLFKDQPFVSVFSHREFFADEEMSKGLLTSQTDPPTSIYKRWFIKNTQEKHFELLIQRQRWLRTNSSLSNGFFRSNTRSESYQYLSNLFLSNGTLLDRMTKTLLKKRWLFSDEMKIGFM.

ATP is bound at residue 1647–1654 (GSIGTGRS).

The protein belongs to the Ycf2 family.

The protein localises to the plastid. It is found in the chloroplast stroma. In terms of biological role, probable ATPase of unknown function. Its presence in a non-photosynthetic plant (Epifagus virginiana) and experiments in tobacco indicate that it has an essential function which is probably not related to photosynthesis. This Crucihimalaya wallichii (Rock-cress) protein is Protein Ycf2 A.